The following is a 185-amino-acid chain: Probable DNA-directed RNA polymerase subunit delta (185 aa).

The HTH HARE-type domain occupies 14–81; it reads LSMIEVAHAI…GDNTWGLRAW (68 aa). The interval 90–185 is disordered; that stretch reads ATVGENEEDE…DEEDEDEDDE (96 aa). 2 stretches are compositionally biased toward acidic residues: residues 117-167 and 175-185; these read DTDD…DDGI and HDEEDEDEDDE.

It belongs to the RpoE family. As to quaternary structure, RNAP is composed of a core of 2 alpha, a beta and a beta' subunits. The core is associated with a delta subunit and one of several sigma factors.

Its function is as follows. Participates in both the initiation and recycling phases of transcription. In the presence of the delta subunit, RNAP displays an increased specificity of transcription, a decreased affinity for nucleic acids, and an increased efficiency of RNA synthesis because of enhanced recycling. This is Probable DNA-directed RNA polymerase subunit delta from Limosilactobacillus reuteri (strain DSM 20016) (Lactobacillus reuteri).